A 139-amino-acid chain; its full sequence is MYRSTLPKRARVLKRRQFLYISRAGSRCQGSQVIFHVAPSKYPGCCKLGITVSKKFGKANKRNYFKRIVREAFRLKRHSLPSCQIVVMPKNKHRPKFEELLQDFTQQIPEALNSKFSKNKSTIGGEYSPKNEQCESELP.

Positions 116–139 (FSKNKSTIGGEYSPKNEQCESELP) are disordered.

Belongs to the RnpA family. Consists of a catalytic RNA component (M1 or rnpB) and a protein subunit.

The catalysed reaction is Endonucleolytic cleavage of RNA, removing 5'-extranucleotides from tRNA precursor.. In terms of biological role, RNaseP catalyzes the removal of the 5'-leader sequence from pre-tRNA to produce the mature 5'-terminus. It can also cleave other RNA substrates such as 4.5S RNA. The protein component plays an auxiliary but essential role in vivo by binding to the 5'-leader sequence and broadening the substrate specificity of the ribozyme. This chain is Ribonuclease P protein component, found in Chlamydia abortus (strain DSM 27085 / S26/3) (Chlamydophila abortus).